We begin with the raw amino-acid sequence, 138 residues long: Large ribosomal subunit protein uL11c (138 aa).

This sequence belongs to the universal ribosomal protein uL11 family. In terms of assembly, part of the ribosomal stalk of the 50S ribosomal subunit. Interacts with L10 and the large rRNA to form the base of the stalk. L10 forms an elongated spine to which L12 dimers bind in a sequential fashion forming a multimeric L10(L12)X complex.

The protein localises to the plastid. Its subcellular location is the chloroplast. Its function is as follows. Forms part of the ribosomal stalk which helps the ribosome interact with GTP-bound translation factors. The protein is Large ribosomal subunit protein uL11c of Cyanidioschyzon merolae (strain NIES-3377 / 10D) (Unicellular red alga).